Reading from the N-terminus, the 626-residue chain is ATP-dependent zinc metalloprotease FtsH (626 aa).

At methionine 1 to asparagine 5 the chain is on the cytoplasmic side. A helical membrane pass occupies residues leucine 6–serine 26. At arginine 27 to serine 98 the chain is on the periplasmic side. The chain crosses the membrane as a helical span at residues phenylalanine 99 to leucine 119. At methionine 120–alanine 626 the chain is on the cytoplasmic side. Glycine 191 to threonine 198 provides a ligand contact to ATP. Residue histidine 413 coordinates Zn(2+). Glutamate 414 is an active-site residue. Positions 417 and 491 each coordinate Zn(2+).

It in the central section; belongs to the AAA ATPase family. The protein in the C-terminal section; belongs to the peptidase M41 family. Homohexamer. Zn(2+) serves as cofactor.

The protein localises to the cell inner membrane. Its function is as follows. Acts as a processive, ATP-dependent zinc metallopeptidase for both cytoplasmic and membrane proteins. Plays a role in the quality control of integral membrane proteins. Functionally, absence of FtsH leads to increased sigma-32 levels, which suggests, in analogy to E.coli, that sigma-32 is a substrate for FtsH. May play a role in the general stress response, as overexpression leads to improved resistance to salt stress. The polypeptide is ATP-dependent zinc metalloprotease FtsH (Caulobacter vibrioides (strain NA1000 / CB15N) (Caulobacter crescentus)).